A 353-amino-acid chain; its full sequence is uncharacterized protein (353 aa).

9 helical membrane passes run 16–36 (AAYIIGFSFLAVSIILGISCG), 77–97 (VVLAALVGAALSIAGAAFQGL), 106–128 (YTLGVSSGASVGAVVTLFLGLHL), 140–160 (SVAAALATMAAVLFFSRLVHA), 167–187 (LILTGVITNSFLGAFISLIIA), 208–228 (GWSYVILFLPFFLLGTILLII), 263–283 (LLTGSAVAVSGTIGFVGLVIP), 296–316 (HLLPLSALLGAGFLVLADLLS), and 323–343 (IELPIGIITSLAGAPVFALIL).

It belongs to the binding-protein-dependent transport system permease family. FecCD subfamily. In terms of assembly, the complex is composed of two ATP-binding proteins (YvrA), two transmembrane proteins (YvrB) and a solute-binding protein (YvrC).

Its subcellular location is the cell membrane. Its function is as follows. Probably part of an ABC transporter complex. Probably responsible for the translocation of the substrate across the membrane. This is an uncharacterized protein from Bacillus subtilis (strain 168).